The primary structure comprises 455 residues: Xylan O-acetyltransferase 3 (455 aa).

The span at 1–15 (MSKPQQQSPPSTTTT) shows a compositional bias: low complexity. The disordered stretch occupies residues 1 to 32 (MSKPQQQSPPSTTTTSPPPPPPSTPPPASSSR). Topologically, residues 1-42 (MSKPQQQSPPSTTTTSPPPPPPSTPPPASSSRSLLSALRRSP) are cytoplasmic. Residues 16–28 (SPPPPPPSTPPPA) are compositionally biased toward pro residues. The chain crosses the membrane as a helical; Signal-anchor for type II membrane protein span at residues 43–59 (VTTLVAAFFLLALFMYG). The Lumenal segment spans residues 60 to 455 (EDVRTLAELS…PSTHPSLPPQ (396 aa)). 3 N-linked (GlcNAc...) asparagine glycosylation sites follow: Asn82, Asn107, and Asn146. Intrachain disulfides connect Cys96/Cys147, Cys118/Cys183, Cys127/Cys423, and Cys339/Cys419. The GDS motif motif lies at 170-172 (GDS). Ser172 serves as the catalytic Nucleophile. 2 N-linked (GlcNAc...) asparagine glycosylation sites follow: Asn278 and Asn348. Catalysis depends on Asp418, which acts as the Proton donor. The DXXH motif motif lies at 418 to 421 (DCIH). Catalysis depends on His421, which acts as the Proton acceptor.

The protein belongs to the PC-esterase family. TBL subfamily. In terms of tissue distribution, highly expressed in leaves. Expressed in roots, stems and inflorescences.

The protein resides in the golgi apparatus membrane. Xylan acetyltransferase required for 2-O- and 3-O-monoacetylation of xylosyl residues in xylan. Catalyzes the 2-O-acetylation of xylan, followed by nonenzymatic acetyl migration to the O-3 position, resulting in products that are monoacetylated at both O-2 and O-3 positions. In Oryza sativa subsp. japonica (Rice), this protein is Xylan O-acetyltransferase 3.